We begin with the raw amino-acid sequence, 145 residues long: D-aminoacyl-tRNA deacylase (145 aa).

Residues 137–138 carry the Gly-cisPro motif, important for rejection of L-amino acids motif; it reads GP.

It belongs to the DTD family. In terms of assembly, homodimer.

It is found in the cytoplasm. The catalysed reaction is glycyl-tRNA(Ala) + H2O = tRNA(Ala) + glycine + H(+). The enzyme catalyses a D-aminoacyl-tRNA + H2O = a tRNA + a D-alpha-amino acid + H(+). Its function is as follows. An aminoacyl-tRNA editing enzyme that deacylates mischarged D-aminoacyl-tRNAs. Also deacylates mischarged glycyl-tRNA(Ala), protecting cells against glycine mischarging by AlaRS. Acts via tRNA-based rather than protein-based catalysis; rejects L-amino acids rather than detecting D-amino acids in the active site. By recycling D-aminoacyl-tRNA to D-amino acids and free tRNA molecules, this enzyme counteracts the toxicity associated with the formation of D-aminoacyl-tRNA entities in vivo and helps enforce protein L-homochirality. This is D-aminoacyl-tRNA deacylase from Citrobacter koseri (strain ATCC BAA-895 / CDC 4225-83 / SGSC4696).